The sequence spans 1435 residues: Sterol 3-beta-glucosyltransferase (1435 aa).

Disordered stretches follow at residues 1–26 (MAPD…HQVA), 75–107 (SDEE…KFEG), 123–169 (RFSS…KDTP), and 185–206 (PSFE…RTSP). The segment covering 85 to 99 (TRQSSESHINRSSID) has biased composition (polar residues). Low complexity predominate over residues 123-133 (RFSSRSKSKSS). A compositionally biased stretch (polar residues) spans 134–143 (NTIARGSRTP). Positions 189 to 206 (MPRKSKDPAEVDDERTSP) are enriched in basic and acidic residues. The GRAM 1 domain occupies 211–258 (ERLMEIFKFETPEDVLEEYPCWLMKSVLLQGYMYITTKHICFYAYLPK). The PH domain occupies 262 to 360 (EVVKSGYLSK…WVKALQKIIF (99 aa)). Disordered stretches follow at residues 444 to 477 (LSTA…PNAP), 527 to 594 (DLNR…QASA), 610 to 671 (QHSP…QAEI), and 727 to 759 (GKKH…ATPA). Residues 527 to 537 (DLNRLTTEHHR) show a composition bias toward basic and acidic residues. 3 stretches are compositionally biased toward polar residues: residues 539–554 (NSAN…STNR), 628–647 (KSRS…TRTQ), and 657–671 (TTGS…QAEI). Positions 729-742 (KHYEEPHGIPRDNE) are enriched in basic and acidic residues. The GRAM 2 domain maps to 760-826 (DRFRDHFALP…KDIENVDKEK (67 aa)). Positions 949, 950, 952, 1252, 1254, 1267, 1271, 1272, 1291, and 1292 each coordinate UDP-alpha-D-glucose.

It belongs to the glycosyltransferase 28 family.

The protein localises to the cytoplasm. It is found in the preautophagosomal structure membrane. It carries out the reaction a sterol + UDP-alpha-D-glucose = a sterol 3-beta-D-glucoside + UDP + H(+). The catalysed reaction is ergosterol + UDP-alpha-D-glucose = ergosteryl 3-beta-D-glucoside + UDP + H(+). In terms of biological role, sterol glycosyltransferase responsible for the glycosylation of ergosterol to form ergosterol-glucoside. The sequence is that of Sterol 3-beta-glucosyltransferase from Sclerotinia sclerotiorum (strain ATCC 18683 / 1980 / Ss-1) (White mold).